The chain runs to 139 residues: MASQFELRIVSAEKQIFNGQVVSVRVSGVEGELGIYAGHTPLLTAIKPGMVKYTLEDNKEEFIYVSGGFLEVQPTIVTVLADIAIRGEELDQQRIIAAKRKAEDTLSKTNNAELSAKLAREIAKLRVYEIVNSKLTKKR.

This sequence belongs to the ATPase epsilon chain family. As to quaternary structure, F-type ATPases have 2 components, CF(1) - the catalytic core - and CF(0) - the membrane proton channel. CF(1) has five subunits: alpha(3), beta(3), gamma(1), delta(1), epsilon(1). CF(0) has three main subunits: a, b and c.

It is found in the cell inner membrane. Produces ATP from ADP in the presence of a proton gradient across the membrane. The chain is ATP synthase epsilon chain from Haemophilus ducreyi (strain 35000HP / ATCC 700724).